The following is a 406-amino-acid chain: Cysteine desulfurase (406 aa).

Lys226 bears the N6-(pyridoxal phosphate)lysine mark. The Cysteine persulfide intermediate role is filled by Cys364.

This sequence belongs to the class-V pyridoxal-phosphate-dependent aminotransferase family. Csd subfamily. Homodimer. Interacts with SufE and the SufBCD complex composed of SufB, SufC and SufD. The interaction with SufE is required to mediate the direct transfer of the sulfur atom from the S-sulfanylcysteine. Requires pyridoxal 5'-phosphate as cofactor.

The protein localises to the cytoplasm. The enzyme catalyses (sulfur carrier)-H + L-cysteine = (sulfur carrier)-SH + L-alanine. It catalyses the reaction L-selenocysteine + AH2 = hydrogenselenide + L-alanine + A + H(+). It functions in the pathway cofactor biosynthesis; iron-sulfur cluster biosynthesis. Cysteine desulfurases mobilize the sulfur from L-cysteine to yield L-alanine, an essential step in sulfur metabolism for biosynthesis of a variety of sulfur-containing biomolecules. Component of the suf operon, which is activated and required under specific conditions such as oxidative stress and iron limitation. Acts as a potent selenocysteine lyase in vitro, that mobilizes selenium from L-selenocysteine. Selenocysteine lyase activity is however unsure in vivo. The polypeptide is Cysteine desulfurase (Escherichia coli O127:H6 (strain E2348/69 / EPEC)).